We begin with the raw amino-acid sequence, 395 residues long: Pyridinium-3,5-bisthiocarboxylic acid mononucleotide nickel insertion protein (395 aa).

This sequence belongs to the LarC family.

The catalysed reaction is Ni(II)-pyridinium-3,5-bisthiocarboxylate mononucleotide = pyridinium-3,5-bisthiocarboxylate mononucleotide + Ni(2+). Involved in the biosynthesis of a nickel-pincer cofactor ((SCS)Ni(II) pincer complex). Binds Ni(2+), and functions in nickel delivery to pyridinium-3,5-bisthiocarboxylic acid mononucleotide (P2TMN), to form the mature cofactor. Is thus probably required for the activation of nickel-pincer cofactor-dependent enzymes. The chain is Pyridinium-3,5-bisthiocarboxylic acid mononucleotide nickel insertion protein from Staphylococcus epidermidis (strain ATCC 35984 / DSM 28319 / BCRC 17069 / CCUG 31568 / BM 3577 / RP62A).